Reading from the N-terminus, the 383-residue chain is 3-phytase (383 aa).

The signal sequence occupies residues 1 to 26; the sequence is MNHSKTLLLTAAAGLMLTCGAVSSQA. A propeptide spanning residues 27–29 is cleaved from the precursor; sequence KHK. The 333-residue stretch at 30–362 folds into the BPP domain; it reads LSDPYHFTVN…VPWERIADQI (333 aa).

It depends on Ca(2+) as a cofactor.

The protein resides in the secreted. The enzyme catalyses 1D-myo-inositol hexakisphosphate + H2O = 1D-myo-inositol 1,2,4,5,6-pentakisphosphate + phosphate. In terms of biological role, catalyzes the hydrolysis of inorganic orthophosphate from phytate. Only phytate, ADP, and ATP were hydrolyzed (100, 75, and 50% of the relative activity, respectively). The sequence is that of 3-phytase (phyC) from Bacillus subtilis.